We begin with the raw amino-acid sequence, 477 residues long: Trigger factor (477 aa).

Residues 163-248 (ENLVIFDYKA…ITEVKKSEEV (86 aa)) enclose the PPIase FKBP-type domain. A compositionally biased stretch (basic and acidic residues) spans 408 to 461 (KAKPSKKEISKEEAEKILKEHQKQDHNHEHDHNHDHDHPEEKKASKSTKIEKKP). The tract at residues 408–477 (KAKPSKKEIS…KPSTKKVSKK (70 aa)) is disordered.

It belongs to the FKBP-type PPIase family. Tig subfamily.

It is found in the cytoplasm. It catalyses the reaction [protein]-peptidylproline (omega=180) = [protein]-peptidylproline (omega=0). Involved in protein export. Acts as a chaperone by maintaining the newly synthesized protein in an open conformation. Functions as a peptidyl-prolyl cis-trans isomerase. The polypeptide is Trigger factor (Pelagibacter ubique (strain HTCC1062)).